Reading from the N-terminus, the 959-residue chain is General transcription factor II-I repeat domain-containing protein 1 (959 aa).

Glycyl lysine isopeptide (Lys-Gly) (interchain with G-Cter in SUMO2) cross-links involve residues Lys-27 and Lys-94. A compositionally biased stretch (basic and acidic residues) spans 96–106 (PEAEHPKKVQR). The tract at residues 96–117 (PEAEHPKKVQRGEGGGRSLPRS) is disordered. Residues 119-213 (LEHGSDVYLL…LEDGGRDSKA (95 aa)) form a GTF2I-like 1 repeat. Glycyl lysine isopeptide (Lys-Gly) (interchain with G-Cter in SUMO2) cross-links involve residues Lys-184, Lys-212, Lys-225, Lys-238, Lys-271, Lys-294, Lys-308, Lys-337, Lys-436, Lys-439, and Lys-443. A disordered region spans residues 230 to 250 (CGLHGQAPKVPPQDLPPTATS). A GTF2I-like 2 repeat occupies 342-436 (IKETEDINTL…FDERIFTGNK (95 aa)). Ser-448 carries the phosphoserine modification. Residues 468 to 492 (NARSDKGSMSEDCGPGTSGELGGLR) form a disordered region. Residues 556–650 (DSHGDVIRPL…ELLTEGVKEP (95 aa)) form a GTF2I-like 3 repeat. Glycyl lysine isopeptide (Lys-Gly) (interchain with G-Cter in SUMO2) cross-links involve residues Lys-567, Lys-579, Lys-588, Lys-622, Lys-638, and Lys-648. Residue Ser-654 is modified to Phosphoserine. The tract at residues 654–679 (SQGTASSLGFSPPALPPERDSGDPLV) is disordered. Glycyl lysine isopeptide (Lys-Gly) (interchain with G-Cter in SUMO2) cross-links involve residues Pro-669, Pro-670, Asp-680, and Lys-684. Residue Gln-686 is modified to Phosphoserine. GTF2I-like repeat units follow at residues 696–790 (LSRI…KPDE) and 793–887 (ANRL…ICND). Residues Ile-701, Lys-724, Lys-732, Lys-772, Lys-774, Lys-787, Lys-829, Lys-889, and Lys-893 each participate in a glycyl lysine isopeptide (Lys-Gly) (interchain with G-Cter in SUMO2) cross-link. The tract at residues 892–927 (AKDSSIPKRKRKRVSEGNSVSSSSSSSSSSSSNPDS) is disordered. Residues 898–905 (PKRKRKRV) carry the Nuclear localization signal motif. A compositionally biased stretch (low complexity) spans 910–923 (SVSSSSSSSSSSSS).

The protein belongs to the TFII-I family. As to quaternary structure, interacts with the retinoblastoma protein (RB1) via its C-terminus. In terms of tissue distribution, highly expressed in adult skeletal muscle, heart, fibroblast, bone and fetal tissues. Expressed at lower levels in all other tissues tested.

It localises to the nucleus. May be a transcription regulator involved in cell-cycle progression and skeletal muscle differentiation. May repress GTF2I transcriptional functions, by preventing its nuclear residency, or by inhibiting its transcriptional activation. May contribute to slow-twitch fiber type specificity during myogenesis and in regenerating muscles. Binds troponin I slow-muscle fiber enhancer (USE B1). Binds specifically and with high affinity to the EFG sequences derived from the early enhancer of HOXC8. This chain is General transcription factor II-I repeat domain-containing protein 1 (GTF2IRD1), found in Homo sapiens (Human).